A 173-amino-acid chain; its full sequence is ATP-dependent protease subunit HslV (173 aa).

T2 is a catalytic residue. 3 residues coordinate Na(+): G158, D161, and S164.

The protein belongs to the peptidase T1B family. HslV subfamily. As to quaternary structure, a double ring-shaped homohexamer of HslV is capped on each side by a ring-shaped HslU homohexamer. The assembly of the HslU/HslV complex is dependent on binding of ATP.

The protein localises to the cytoplasm. It carries out the reaction ATP-dependent cleavage of peptide bonds with broad specificity.. With respect to regulation, allosterically activated by HslU binding. Protease subunit of a proteasome-like degradation complex believed to be a general protein degrading machinery. The polypeptide is ATP-dependent protease subunit HslV (Actinobacillus pleuropneumoniae serotype 5b (strain L20)).